Consider the following 623-residue polypeptide: Calnexin (623 aa).

The first 21 residues, 1 to 21 (MLNRKWSFVFLTFLLVISVNA), serve as a signal peptide directing secretion. Position 108 (D108) interacts with Ca(2+). A disulfide bridge connects residues C151 and C185. Y155, K157, Y176, and D183 together coordinate an alpha-D-glucoside. N202 carries N-linked (GlcNAc...) asparagine glycosylation. Positions 260 to 337 (SLTPPKEIFD…QKPQDWDEDM (78 aa)) are disordered. Basic and acidic residues predominate over residues 266–276 (EIFDETDLKPE). A p domain (Extended arm) region spans residues 267-400 (IFDETDLKPE…RLIDNPNYFE (134 aa)). 5 tandem repeats follow at residues 269–281 (DETDLKPEDWDER), 286–298 (DETASKPDDWDEN), 305–317 (DESATKPYDWNEE), 324–336 (DPEAQKPQDWDED), and 339–349 (GSWEAPLIDNP). 4 X approximate repeats stretches follow at residues 269 to 336 (DETD…WDED) and 339 to 396 (GSWE…IDNP). Acidic residues-rich tracts occupy residues 277 to 287 (DWDEREQIEDE) and 314 to 323 (WNEEENELIP). Cysteines 351 and 357 form a disulfide. Repeat copies occupy residues 358–368 (GTWKPPTIKNP), 372–382 (GKWVRPKIANP), and 386–396 (GKWSPRLIDNP). An an alpha-D-glucoside-binding site is contributed by E416. D427 provides a ligand contact to Ca(2+). Residues 480–500 (LWAVYILCILLPLIAIGVFCF) traverse the membrane as a helical segment. The interval 536–623 (IAEDEEDNQP…AKRRTARRGD (88 aa)) is disordered. Positions 556–565 (IDEDEQDEVE) are enriched in acidic residues. Positions 566–581 (QQPSSSKTASSESSSA) are enriched in low complexity. Basic residues predominate over residues 614 to 623 (AKRRTARRGD).

It belongs to the calreticulin family. Post-translationally, glycosylation is important for its biological activity.

It localises to the endoplasmic reticulum membrane. The protein resides in the cytoplasm. It is found in the perinuclear region. The protein localises to the cytoplasmic vesicle. Functionally, calcium-binding protein that interacts with newly synthesized monoglucosylated glycoproteins in the endoplasmic reticulum. It may act in assisting protein assembly and/or in the retention within the ER of unassembled protein subunits. It seems to play a major role in the quality control apparatus of the ER by the retention of incorrectly folded proteins. Required for embryogenesis and larval development under heat and ER stress conditions. May be important for germ cell development. Involved in neuronal necrotic cell death. The chain is Calnexin from Caenorhabditis briggsae.